The sequence spans 378 residues: Probable E3 ubiquitin-protein ligase LUL3 (378 aa).

Basic residues predominate over residues 1–21 (MGISLSKRRRDNNNNHHHPHH). Residues 1-79 (MGISLSKRRR…PPSQISYRPY (79 aa)) are disordered. Residue G2 is the site of N-myristoyl glycine attachment. Composition is skewed to pro residues over residues 29–38 (DPPPQQPPPQ) and 55–72 (SLPP…PPPS). Residues 164 to 283 (FVFDALFDGS…GSFKVKVMKQ (120 aa)) are DAR2 domain. The RING-type; atypical zinc finger occupies 321 to 360 (CVICLTEPKDTAVMPCRHLCLCSDCAEELRFQTNKCPICR).

The protein belongs to the RING-type zinc finger family. LOG2 subfamily. Myristoylated (in vitro).

It carries out the reaction S-ubiquitinyl-[E2 ubiquitin-conjugating enzyme]-L-cysteine + [acceptor protein]-L-lysine = [E2 ubiquitin-conjugating enzyme]-L-cysteine + N(6)-ubiquitinyl-[acceptor protein]-L-lysine.. It functions in the pathway protein modification; protein ubiquitination. In terms of biological role, acts as an E3 ubiquitin-protein ligase, or as part of E3 complex, which accepts ubiquitin from specific E2 ubiquitin-conjugating enzymes and then transfers it to substrates (in vitro). The protein is Probable E3 ubiquitin-protein ligase LUL3 (LUL3) of Arabidopsis thaliana (Mouse-ear cress).